Reading from the N-terminus, the 666-residue chain is DNA mismatch repair protein MutL (666 aa).

Belongs to the DNA mismatch repair MutL/HexB family.

Its function is as follows. This protein is involved in the repair of mismatches in DNA. It is required for dam-dependent methyl-directed DNA mismatch repair. May act as a 'molecular matchmaker', a protein that promotes the formation of a stable complex between two or more DNA-binding proteins in an ATP-dependent manner without itself being part of a final effector complex. The sequence is that of DNA mismatch repair protein MutL from Clostridium botulinum (strain ATCC 19397 / Type A).